Consider the following 749-residue polypeptide: Patatin-like phospholipase domain-containing protein An01g04180 (749 aa).

The tract at residues 1 to 21 (MNGAEKSAAGDTYDPSTIPDY) is disordered. The helical transmembrane segment at 87-107 (WPFLFTVFGWITALAFAYTLT) threads the bilayer. A PNPLA domain is found at 277 to 468 (LCLSGGATFA…RTDIPIKALN (192 aa)). The GXSXG signature appears at 308–312 (GTSGG). Ser-310 functions as the Nucleophile in the catalytic mechanism. Residue Asp-455 is the Proton acceptor of the active site. The tract at residues 619–726 (AGGRPISPAP…STGSSIFEEV (108 aa)) is disordered. The segment covering 649-664 (PLNERLDHNLPERRGD) has biased composition (basic and acidic residues). Residues 685 to 707 (SLSENSSNESAARPSSSSSSSRL) are compositionally biased toward low complexity.

The protein belongs to the PLPL family.

It is found in the membrane. In terms of biological role, probable lipid hydrolase. In Aspergillus niger (strain ATCC MYA-4892 / CBS 513.88 / FGSC A1513), this protein is Patatin-like phospholipase domain-containing protein An01g04180.